We begin with the raw amino-acid sequence, 388 residues long: Sex-determination protein fem-3 (388 aa).

6 consecutive repeat copies span residues 7–10 (SDDV), 110–113 (ITRF), 141–144 (ITRF), 234–237 (YHTT), 284–287 (YHTT), and 371–374 (SDDV).

As to quaternary structure, component of a complex containing fem-1, fem-2 and fem-3. Interacts with fem-1 and fem-2 (via N-terminus). Part of a E3 ubiquitin-protein ligase complex, at least composed of cul-2, elc-1, tra-1, fem-1, fem-2 and fem-3; mediates the ubiquitination and subsequent proteasomal degradation of tra-1. Interacts with tra-1. Interacts with sel-10. Interacts with tra-2.

Functionally, required for male development. In XO (male) animals, fem-3 directs male differentiation in all tissues. In XX (hermaphrodite) animals, it specifies the first 80 or so germ cells to be sperm. Negatively regulates male development when bound to tra-2. Together with fem-2 associates with the CBC(fem-1) E3 ubiquitin-protein ligase complex which mediates the ubiquitination and subsequent proteasomal degradation of tra-1. In Caenorhabditis elegans, this protein is Sex-determination protein fem-3 (fem-3).